The chain runs to 279 residues: 3-methyl-2-oxobutanoate hydroxymethyltransferase (279 aa).

Mg(2+)-binding residues include Asp-43 and Asp-82. Residues 43-44 (DS), Asp-82, and Lys-112 contribute to the 3-methyl-2-oxobutanoate site. Glu-114 lines the Mg(2+) pocket. Glu-181 functions as the Proton acceptor in the catalytic mechanism.

It belongs to the PanB family. As to quaternary structure, homodecamer; pentamer of dimers. Requires Mg(2+) as cofactor.

It localises to the cytoplasm. The catalysed reaction is 3-methyl-2-oxobutanoate + (6R)-5,10-methylene-5,6,7,8-tetrahydrofolate + H2O = 2-dehydropantoate + (6S)-5,6,7,8-tetrahydrofolate. It participates in cofactor biosynthesis; (R)-pantothenate biosynthesis; (R)-pantoate from 3-methyl-2-oxobutanoate: step 1/2. In terms of biological role, catalyzes the reversible reaction in which hydroxymethyl group from 5,10-methylenetetrahydrofolate is transferred onto alpha-ketoisovalerate to form ketopantoate. This chain is 3-methyl-2-oxobutanoate hydroxymethyltransferase, found in Bacillus pumilus (strain SAFR-032).